Here is a 269-residue protein sequence, read N- to C-terminus: Hydroxyethylthiazole kinase (269 aa).

M45 contributes to the substrate binding site. The ATP site is built by R121 and T167. A substrate-binding site is contributed by G194.

The protein belongs to the Thz kinase family. Mg(2+) is required as a cofactor.

It catalyses the reaction 5-(2-hydroxyethyl)-4-methylthiazole + ATP = 4-methyl-5-(2-phosphooxyethyl)-thiazole + ADP + H(+). It participates in cofactor biosynthesis; thiamine diphosphate biosynthesis; 4-methyl-5-(2-phosphoethyl)-thiazole from 5-(2-hydroxyethyl)-4-methylthiazole: step 1/1. Its function is as follows. Catalyzes the phosphorylation of the hydroxyl group of 4-methyl-5-beta-hydroxyethylthiazole (THZ). The chain is Hydroxyethylthiazole kinase from Bacillus cereus (strain ATCC 14579 / DSM 31 / CCUG 7414 / JCM 2152 / NBRC 15305 / NCIMB 9373 / NCTC 2599 / NRRL B-3711).